The following is a 558-amino-acid chain: Thermosome subunit alpha (558 aa).

The tract at residues 536–558 (TEKGKKEGGEGAGAETPGAPSLE) is disordered. Residues 548 to 558 (GAETPGAPSLE) are compositionally biased toward low complexity.

The protein belongs to the TCP-1 chaperonin family. As to quaternary structure, forms a Heterooligomeric complex of two stacked eight-membered rings.

In terms of biological role, molecular chaperone; binds unfolded polypeptides in vitro, and has a weak ATPase activity. The chain is Thermosome subunit alpha (thsA) from Sulfolobus acidocaldarius (strain ATCC 33909 / DSM 639 / JCM 8929 / NBRC 15157 / NCIMB 11770).